Consider the following 1438-residue polypeptide: Pyochelin synthetase PchE (1438 aa).

A Carrier 1 domain is found at 6 to 85; it reads DSRTALRDWL…AWLDLLACAD (80 aa). The residue at position 46 (S46) is an O-(pantetheine 4'-phosphoryl)serine. The tract at residues 136–442 is condensation/cyclization; the sequence is RTRDVDPQRL…ARRQGQPRSA (307 aa). Residues 563 to 950 are adenylation; sequence RAAEAPDADA…GRVDQQVKVR (388 aa). The 76-residue stretch at 1350–1425 folds into the Carrier 2 domain; that stretch reads EPLEAHEQAL…GLARHLQVQT (76 aa). S1385 is modified (O-(pantetheine 4'-phosphoryl)serine).

The protein belongs to the NRP synthetase family. Pantetheine 4'-phosphate is required as a cofactor.

The enzyme catalyses holo-[peptidyl-carrier protein] + L-cysteine + ATP = L-cysteinyl-[peptidyl-carrier protein] + AMP + diphosphate. The protein operates within siderophore biosynthesis. It participates in antifungal biosynthesis. Functionally, involved in the biosynthesis of the siderophore pyochelin. Accepts salicylate activated by PchD at the first peptidyl carrier domain (ArCP), and activates and fixes one molecule of cysteine at the second peptidyl carrier domain (PCP1) via a thioester linkage to the phosphopanthetheine moiety. Then catalyzes the condensation reaction between the salicylate bound to the first site and the cysteine bound to the second site, and the cyclization of the cysteine to form the salicyl-thiazolinyl-S-PCP1 intermediate at the second site. When this intermediate is released by the action of a thioesterase, it produces the antifungal antibiotic dihydroaeruginoic acid (Dha or hydroxyphenyl-thiazolinyl-carboxylate). In Pseudomonas aeruginosa (strain ATCC 15692 / DSM 22644 / CIP 104116 / JCM 14847 / LMG 12228 / 1C / PRS 101 / PAO1), this protein is Pyochelin synthetase PchE.